A 706-amino-acid chain; its full sequence is Polyribonucleotide nucleotidyltransferase (706 aa).

Residues Asp-487 and Asp-493 each contribute to the Mg(2+) site. One can recognise a KH domain in the interval 553–612 (PRLFTMKISQDKIRDVIGKGGETIRSITAETGTEINIAEDGTITIAATTQEAGDAAKKRI). The region spanning 622-692 (GKVYEGTVVK…DRGRVRLSIK (71 aa)) is the S1 motif domain.

This sequence belongs to the polyribonucleotide nucleotidyltransferase family. The cofactor is Mg(2+).

It localises to the cytoplasm. It carries out the reaction RNA(n+1) + phosphate = RNA(n) + a ribonucleoside 5'-diphosphate. Functionally, involved in mRNA degradation. Catalyzes the phosphorolysis of single-stranded polyribonucleotides processively in the 3'- to 5'-direction. The polypeptide is Polyribonucleotide nucleotidyltransferase (Neisseria gonorrhoeae (strain ATCC 700825 / FA 1090)).